Consider the following 251-residue polypeptide: 3-dehydroquinate dehydratase (251 aa).

Residues 47–49 (EWR) and R83 contribute to the 3-dehydroquinate site. H144 (proton donor/acceptor) is an active-site residue. K171 serves as the catalytic Schiff-base intermediate with substrate. 3-dehydroquinate contacts are provided by R214, S233, and Q237.

It belongs to the type-I 3-dehydroquinase family. In terms of assembly, homodimer.

The catalysed reaction is 3-dehydroquinate = 3-dehydroshikimate + H2O. It participates in metabolic intermediate biosynthesis; chorismate biosynthesis; chorismate from D-erythrose 4-phosphate and phosphoenolpyruvate: step 3/7. Involved in the third step of the chorismate pathway, which leads to the biosynthesis of aromatic amino acids. Catalyzes the cis-dehydration of 3-dehydroquinate (DHQ) and introduces the first double bond of the aromatic ring to yield 3-dehydroshikimate. The protein is 3-dehydroquinate dehydratase of Klebsiella pneumoniae (strain 342).